A 577-amino-acid polypeptide reads, in one-letter code: Arginine--tRNA ligase (577 aa).

The short motif at 122–132 (PNVAKEMHVGH) is the 'HIGH' region element.

It belongs to the class-I aminoacyl-tRNA synthetase family. Monomer.

Its subcellular location is the cytoplasm. The enzyme catalyses tRNA(Arg) + L-arginine + ATP = L-arginyl-tRNA(Arg) + AMP + diphosphate. In Escherichia coli O7:K1 (strain IAI39 / ExPEC), this protein is Arginine--tRNA ligase.